Consider the following 98-residue polypeptide: Large ribosomal subunit protein uL23 (98 aa).

Belongs to the universal ribosomal protein uL23 family. In terms of assembly, part of the 50S ribosomal subunit. Contacts protein L29, and trigger factor when it is bound to the ribosome.

Its function is as follows. One of the early assembly proteins it binds 23S rRNA. One of the proteins that surrounds the polypeptide exit tunnel on the outside of the ribosome. Forms the main docking site for trigger factor binding to the ribosome. This chain is Large ribosomal subunit protein uL23, found in Borreliella afzelii (strain PKo) (Borrelia afzelii).